Here is a 403-residue protein sequence, read N- to C-terminus: Na(+)-translocating NADH-quinone reductase subunit B (403 aa).

Transmembrane regions (helical) follow at residues 56–76 (IMIM…YNIG), 114–134 (LAMF…TFIV), and 165–185 (LPAT…VVIA). Threonine 231 carries the post-translational modification FMN phosphoryl threonine. Transmembrane regions (helical) follow at residues 260-280 (GSVG…IIYM), 287-307 (IVLG…VIGS), 312-332 (MFAM…GMFF), 348-368 (WAYG…NPAF), and 371-391 (GMML…YFVA).

This sequence belongs to the NqrB/RnfD family. Composed of six subunits; NqrA, NqrB, NqrC, NqrD, NqrE and NqrF. FMN serves as cofactor.

The protein localises to the cell inner membrane. It carries out the reaction a ubiquinone + n Na(+)(in) + NADH + H(+) = a ubiquinol + n Na(+)(out) + NAD(+). Functionally, NQR complex catalyzes the reduction of ubiquinone-1 to ubiquinol by two successive reactions, coupled with the transport of Na(+) ions from the cytoplasm to the periplasm. NqrA to NqrE are probably involved in the second step, the conversion of ubisemiquinone to ubiquinol. The sequence is that of Na(+)-translocating NADH-quinone reductase subunit B from Pseudoalteromonas atlantica (strain T6c / ATCC BAA-1087).